A 372-amino-acid polypeptide reads, in one-letter code: MIVKNLVLENYRNHTNTRILFSDRFNIFYGDNGQGKTNILEAIYLCASGRSHRTSRDSELIKFGCENFSIAVHVSKTGGLDKDIEISYYENQKKQIKINDIPIKKIGALMGNLYAVLFSPEDLFIVKQGPTERRRFVDITLSQIKPSYFYNLQQMSKILKQRNTLLKNISSNPKLMDTVDIWNMRLAEVAAAIIKARRTFSIMLSGMAENQHNFLTGKSEKISFDYRCSFQISGQDDTEQIEKLYLVQLEKSMQRDIVLGYTTVGPHRDDYDIMINDKSLKLYGSQGQQRSAVLSLKIAEIELVKKATNQYPVLLLDDVMSELDKNRQKYLMDSIKEVQTFITCTNKEHFGNLLSANSNFFKIVGGNIHSCM.

Residue 30 to 37 (GDNGQGKT) participates in ATP binding.

This sequence belongs to the RecF family.

It localises to the cytoplasm. The RecF protein is involved in DNA metabolism; it is required for DNA replication and normal SOS inducibility. RecF binds preferentially to single-stranded, linear DNA. It also seems to bind ATP. The chain is DNA replication and repair protein RecF from Ruminiclostridium cellulolyticum (strain ATCC 35319 / DSM 5812 / JCM 6584 / H10) (Clostridium cellulolyticum).